The sequence spans 202 residues: Peptide deformylase (202 aa).

Fe cation is bound by residues C121 and H163. The active site involves E164. A Fe cation-binding site is contributed by H167.

The protein belongs to the polypeptide deformylase family. Fe(2+) serves as cofactor.

The enzyme catalyses N-terminal N-formyl-L-methionyl-[peptide] + H2O = N-terminal L-methionyl-[peptide] + formate. In terms of biological role, removes the formyl group from the N-terminal Met of newly synthesized proteins. Requires at least a dipeptide for an efficient rate of reaction. N-terminal L-methionine is a prerequisite for activity but the enzyme has broad specificity at other positions. This chain is Peptide deformylase, found in Synechococcus sp. (strain CC9311).